Consider the following 193-residue polypeptide: ATP-dependent Clp protease proteolytic subunit 1 (193 aa).

Residue Ser-99 is the Nucleophile of the active site. The active site involves His-124.

This sequence belongs to the peptidase S14 family. As to quaternary structure, fourteen ClpP subunits assemble into 2 heptameric rings which stack back to back to give a disk-like structure with a central cavity, resembling the structure of eukaryotic proteasomes.

Its subcellular location is the cytoplasm. It carries out the reaction Hydrolysis of proteins to small peptides in the presence of ATP and magnesium. alpha-casein is the usual test substrate. In the absence of ATP, only oligopeptides shorter than five residues are hydrolyzed (such as succinyl-Leu-Tyr-|-NHMec, and Leu-Tyr-Leu-|-Tyr-Trp, in which cleavage of the -Tyr-|-Leu- and -Tyr-|-Trp bonds also occurs).. Functionally, cleaves peptides in various proteins in a process that requires ATP hydrolysis. Has a chymotrypsin-like activity. Plays a major role in the degradation of misfolded proteins. This Shouchella clausii (strain KSM-K16) (Alkalihalobacillus clausii) protein is ATP-dependent Clp protease proteolytic subunit 1.